The following is a 340-amino-acid chain: tRNA N6-adenosine threonylcarbamoyltransferase (340 aa).

Fe cation-binding residues include His111 and His115. Substrate-binding positions include 134-138 (LVSGG), Asp167, Gly180, and Asn276. Asp304 provides a ligand contact to Fe cation.

The protein belongs to the KAE1 / TsaD family. Requires Fe(2+) as cofactor.

The protein resides in the cytoplasm. It catalyses the reaction L-threonylcarbamoyladenylate + adenosine(37) in tRNA = N(6)-L-threonylcarbamoyladenosine(37) in tRNA + AMP + H(+). Required for the formation of a threonylcarbamoyl group on adenosine at position 37 (t(6)A37) in tRNAs that read codons beginning with adenine. Is involved in the transfer of the threonylcarbamoyl moiety of threonylcarbamoyl-AMP (TC-AMP) to the N6 group of A37, together with TsaE and TsaB. TsaD likely plays a direct catalytic role in this reaction. This chain is tRNA N6-adenosine threonylcarbamoyltransferase, found in Helicobacter pylori (strain Shi470).